The primary structure comprises 192 residues: Ion-translocating oxidoreductase complex subunit A (192 aa).

6 consecutive transmembrane segments (helical) span residues 5 to 25 (LLLL…FLGL), 39 to 59 (IGMG…AYLV), 63 to 83 (ILTP…VIAV), 102 to 122 (LLGI…VALL), 134 to 154 (IIYG…FAAM), and 171 to 191 (SIAM…TGLV).

It belongs to the NqrDE/RnfAE family. The complex is composed of six subunits: RnfA, RnfB, RnfC, RnfD, RnfE and RnfG.

The protein localises to the cell inner membrane. Functionally, part of a membrane-bound complex that couples electron transfer with translocation of ions across the membrane. In Vibrio atlanticus (strain LGP32) (Vibrio splendidus (strain Mel32)), this protein is Ion-translocating oxidoreductase complex subunit A.